Consider the following 396-residue polypeptide: 1-deoxy-D-xylulose 5-phosphate reductoisomerase (396 aa).

Residues Thr-13, Gly-14, Ser-15, Ile-16, and Asn-127 each contribute to the NADPH site. Residue Lys-128 coordinates 1-deoxy-D-xylulose 5-phosphate. Glu-129 serves as a coordination point for NADPH. Asp-153 is a Mn(2+) binding site. 1-deoxy-D-xylulose 5-phosphate is bound by residues Ser-154, Glu-155, Ser-184, and His-207. Residue Glu-155 coordinates Mn(2+). Gly-213 is an NADPH binding site. 4 residues coordinate 1-deoxy-D-xylulose 5-phosphate: Ser-220, Asn-225, Lys-226, and Glu-229. Glu-229 provides a ligand contact to Mn(2+).

The protein belongs to the DXR family. Mg(2+) is required as a cofactor. It depends on Mn(2+) as a cofactor.

It carries out the reaction 2-C-methyl-D-erythritol 4-phosphate + NADP(+) = 1-deoxy-D-xylulose 5-phosphate + NADPH + H(+). The protein operates within isoprenoid biosynthesis; isopentenyl diphosphate biosynthesis via DXP pathway; isopentenyl diphosphate from 1-deoxy-D-xylulose 5-phosphate: step 1/6. Its function is as follows. Catalyzes the NADPH-dependent rearrangement and reduction of 1-deoxy-D-xylulose-5-phosphate (DXP) to 2-C-methyl-D-erythritol 4-phosphate (MEP). The polypeptide is 1-deoxy-D-xylulose 5-phosphate reductoisomerase (Pseudomonas fluorescens (strain Pf0-1)).